Here is a 349-residue protein sequence, read N- to C-terminus: Bifunctional protein FolKE (349 aa).

A 2-amino-4-hydroxy-6-hydroxymethyldihydropteridine pyrophosphokinase region spans residues 1–226 (MQTTYLSMGS…LFEIDSSKND (226 aa)). Positions 226–349 (DSIVLIKDIP…KRMEFLESLL (124 aa)) are GTP cyclohydrolase 1.

It in the N-terminal section; belongs to the HPPK family. In the C-terminal section; belongs to the GTP cyclohydrolase I family. In terms of assembly, homomer.

It carries out the reaction 6-hydroxymethyl-7,8-dihydropterin + ATP = (7,8-dihydropterin-6-yl)methyl diphosphate + AMP + H(+). The enzyme catalyses GTP + H2O = 7,8-dihydroneopterin 3'-triphosphate + formate + H(+). It functions in the pathway cofactor biosynthesis; 7,8-dihydroneopterin triphosphate biosynthesis; 7,8-dihydroneopterin triphosphate from GTP: step 1/1. Its pathway is cofactor biosynthesis; tetrahydrofolate biosynthesis; 2-amino-4-hydroxy-6-hydroxymethyl-7,8-dihydropteridine diphosphate from 7,8-dihydroneopterin triphosphate: step 4/4. In Lactococcus lactis subsp. cremoris (strain MG1363), this protein is Bifunctional protein FolKE (folKE).